A 79-amino-acid polypeptide reads, in one-letter code: Conotoxin ArMSGL-0122 (79 aa).

Residues 1-20 (MSRLGIMVLTLLLLVFIVTS) form the signal peptide. Residues 21–44 (HQDAGEKQATQRAAINFRWKRSLT) constitute a propeptide that is removed on maturation. 3 disulfides stabilise this stretch: Cys-52/Cys-64, Cys-56/Cys-73, and Cys-63/Cys-77. At Leu-78 the chain carries Leucine amide.

It belongs to the conotoxin O3 superfamily. In terms of tissue distribution, expressed by the venom duct.

It is found in the secreted. This Conus arenatus (Sand-dusted cone) protein is Conotoxin ArMSGL-0122.